We begin with the raw amino-acid sequence, 354 residues long: UDP-3-O-acylglucosamine N-acyltransferase (354 aa).

H257 serves as the catalytic Proton acceptor.

It belongs to the transferase hexapeptide repeat family. LpxD subfamily. As to quaternary structure, homotrimer.

It catalyses the reaction a UDP-3-O-[(3R)-3-hydroxyacyl]-alpha-D-glucosamine + a (3R)-hydroxyacyl-[ACP] = a UDP-2-N,3-O-bis[(3R)-3-hydroxyacyl]-alpha-D-glucosamine + holo-[ACP] + H(+). It participates in bacterial outer membrane biogenesis; LPS lipid A biosynthesis. Functionally, catalyzes the N-acylation of UDP-3-O-acylglucosamine using 3-hydroxyacyl-ACP as the acyl donor. Is involved in the biosynthesis of lipid A, a phosphorylated glycolipid that anchors the lipopolysaccharide to the outer membrane of the cell. The chain is UDP-3-O-acylglucosamine N-acyltransferase from Rhizobium johnstonii (strain DSM 114642 / LMG 32736 / 3841) (Rhizobium leguminosarum bv. viciae).